A 988-amino-acid chain; its full sequence is Protein argonaute 10 (988 aa).

The segment covering 1 to 11 has biased composition (basic and acidic residues); the sequence is MPIRQMKDSSE. The interval 1–103 is disordered; sequence MPIRQMKDSS…PPSQTTSSAV (103 aa). Residues 41–57 are compositionally biased toward low complexity; it reads PVTVTTPATVTQSQASS. Residues 64–73 are compositionally biased toward basic residues; it reads NRSRRRNRGG. Residues 338-451 form the PAZ domain; that stretch reads PVIEFVAQLL…LPMEACKIVE (114 aa). Positions 625 to 946 constitute a Piwi domain; it reads LLLAILPDNN…AAFRARFYLE (322 aa).

Belongs to the argonaute family. Ago subfamily. As to quaternary structure, interacts with GATA18/HAN and KNAT1/BP. Interacts with RICE1 and RICE2 that act as cofactors. Expressed in roots, stems, leaves, developing embryo, siliques, inflorescences, provascular tissue, shoot apical meristem (SAM) and adaxial (upper) sides of lateral organ primordia. Observed in the floral meristem, the adaxial side of sepal primordia, and the provascular tissue.

It is found in the cytoplasm. In terms of biological role, involved in RNA-mediated post-transcriptional gene silencing (PTGS). Main component of the RNA-induced silencing complex (RISC) that binds to a short guide RNA such as a microRNA (miRNA) or small interfering RNA (siRNA). RISC uses the mature miRNA or siRNA as a guide for slicer-directed cleavage of homologous mRNAs to repress gene expression. Required for reliable formation of primary and axillary shoot apical meristems. Specifies leaf adaxial identity by repressing the miR165 and miR166 microRNAs in the embryonic shoot apex, in the shoot apical meristem (SAM) and leaf. Represses the microRNA miR398 which targets CCS1 chaperone mRNAs for translational inhibition. Acts as a negative regulator of AGO1 protein level. Like AGO1, is required for stem cell function and organ polarity. Unlike AGO1, is not subjected to small RNA-mediated repression itself. Essential for multiple processes in development. Coregulates, with GATA18/HAN, the shoot apical meristem (SAM) organization. This is Protein argonaute 10 from Arabidopsis thaliana (Mouse-ear cress).